A 1065-amino-acid polypeptide reads, in one-letter code: Alpha-L-arabinofuranosidase (1065 aa).

An N-terminal signal peptide occupies residues 1–26; that stretch reads MKHWKKMAASLIAISTMVAVVPTTYA. A BIG2 domain is found at 277–346; sequence VVNNKLTLIE…TTELGGVKAE (70 aa). The segment at 997 to 1031 is disordered; sequence KAPTNPGEGDGDKGDGNKPTTPTTGDKTNVNKPGS. Residues 1014–1031 are compositionally biased toward polar residues; it reads KPTTPTTGDKTNVNKPGS. A helical membrane pass occupies residues 1040–1060; it reads VLGLGGAVVALAIAGISLTLW.

Belongs to the glycosyl hydrolase 43 family.

It is found in the cell membrane. It catalyses the reaction Hydrolysis of terminal non-reducing alpha-L-arabinofuranoside residues in alpha-L-arabinosides.. Functionally, involved in the type II arabinogalactan (AG) side chains degradation. Releases arabinofuranose (Araf) from alpha-1,3-Araf-substituted beta-1,6-galactooligosaccharides. Can use radish root AGP, larch AG and arabinan. Shows weaker activity with gum arabic and arabinoxylan. The polypeptide is Alpha-L-arabinofuranosidase (Bifidobacterium longum subsp. longum (strain ATCC 15707 / DSM 20219 / JCM 1217 / NCTC 11818 / E194b)).